A 269-amino-acid chain; its full sequence is Proline-rich protein 7 (269 aa).

The Extracellular portion of the chain corresponds to 1–9; the sequence is MVMSQGTYT. The required for interaction with NMDA receptors stretch occupies residues 1 to 44; it reads MVMSQGTYTFLTCFAGFWLIWGLIVLLCCFCSFLRRRLKRRQEE. A required for membrane localization region spans residues 2 to 39; sequence VMSQGTYTFLTCFAGFWLIWGLIVLLCCFCSFLRRRLK. A helical; Signal-anchor for type III membrane protein membrane pass occupies residues 10–30; that stretch reads FLTCFAGFWLIWGLIVLLCCF. At 31–269 the chain is on the cytoplasmic side; it reads CSFLRRRLKR…IPLFGRTTAV (239 aa). S64 bears the Phosphoserine mark. Disordered regions lie at residues 64–83 and 98–128; these read SLAG…RSRL and LLHH…LSVP. Positions 108-117 are enriched in basic residues; that stretch reads AHPHPHHHAL. Residues 118-128 are compositionally biased toward pro residues; sequence PHPPPSHLSVP. The interval 146–166 is required for internalization; the sequence is PCYEEAVLMAEPPPPYSEVLT. Residues 146-269 are required for apoptosis induction; it reads PCYEEAVLMA…IPLFGRTTAV (124 aa). A PDZ-binding motif is present at residues 267–269; sequence TAV.

Forms a complex with NMDA receptor zeta subunit GRIN1 and epsilon subunit GRIN2B. Interacts with GRIN2B. Interacts with GRIN1; the interaction is reduced upon NMDA receptor activity. Found in a postsynaptic membrane complex with DLG4 and GRIN1. Interacts with DLG4 (via PDZ3 domain and to lesser degree via PDZ2 domain). Interacts with FBXW7. Found in a complex with JUN and FBXW7. Interacts with JUN and FBXW7; the interaction inhibits ubiquitination-mediated JUN degradation promoting its phosphorylation and transcriptional activity. Interacts with SRC. Post-translationally, palmitoylated. In terms of processing, tyrosine phosphorylated, possibly by SRC. Expressed in brain. Expressed in the cerebral cortex and especially in hippocampal neural cells (at protein level).

Its subcellular location is the cell membrane. It localises to the postsynaptic cell membrane. The protein localises to the postsynaptic density membrane. It is found in the cytoplasm. The protein resides in the perinuclear region. Its subcellular location is the synapse. It localises to the cell projection. The protein localises to the dendrite. It is found in the nucleus. Acts as a synapse-to-nucleus messenger to promote NMDA receptor-mediated excitotoxicity in neurons in a JUN-dependent manner. Inhibits ubiquitination-mediated degradation and promotes phosphorylation and transcriptional activity of transcription factor JUN. Might play a redundant role in the regulation of T cell receptor signaling. Might promote apoptosis in T cells. The chain is Proline-rich protein 7 (Prr7) from Rattus norvegicus (Rat).